A 350-amino-acid polypeptide reads, in one-letter code: tRNA uridine(34) hydroxylase (350 aa).

One can recognise a Rhodanese domain in the interval 146-240 (DDPDALFIDM…YARKARDQGL (95 aa)). Catalysis depends on cysteine 200, which acts as the Cysteine persulfide intermediate.

Belongs to the TrhO family.

It carries out the reaction uridine(34) in tRNA + AH2 + O2 = 5-hydroxyuridine(34) in tRNA + A + H2O. Catalyzes oxygen-dependent 5-hydroxyuridine (ho5U) modification at position 34 in tRNAs, the first step in 5-carboxymethoxyuridine (cmo5U) biosynthesis. May be part of an alternate pathway, which is able to bypass cmo5U biogenesis in a subset of tRNAs under aerobic conditions. The polypeptide is tRNA uridine(34) hydroxylase (Escherichia coli O6:K15:H31 (strain 536 / UPEC)).